A 64-amino-acid chain; its full sequence is Large ribosomal subunit protein bL35 (64 aa).

The segment covering 22 to 31 (GKVKHGHAYR) has biased composition (basic residues). Positions 22–64 (GKVKHGHAYRSHLAQSKTTKQKRQSRKSTLMNNSDFKRLKKLI) are disordered.

This sequence belongs to the bacterial ribosomal protein bL35 family.

This chain is Large ribosomal subunit protein bL35, found in Mesomycoplasma hyopneumoniae (strain 232) (Mycoplasma hyopneumoniae).